The primary structure comprises 242 residues: Uridylate kinase (242 aa).

An ATP-binding site is contributed by 12–15 (KLSG). The segment at 20-25 (GEKGYG) is involved in allosteric activation by GTP. Residue G55 participates in UMP binding. Positions 56 and 60 each coordinate ATP. Residues D75 and 136-143 (TGNPYFST) each bind UMP. ATP is bound by residues Y169 and D172.

The protein belongs to the UMP kinase family. As to quaternary structure, homohexamer.

It localises to the cytoplasm. It carries out the reaction UMP + ATP = UDP + ADP. It participates in pyrimidine metabolism; CTP biosynthesis via de novo pathway; UDP from UMP (UMPK route): step 1/1. With respect to regulation, allosterically activated by GTP. Inhibited by UTP. Catalyzes the reversible phosphorylation of UMP to UDP. In Carboxydothermus hydrogenoformans (strain ATCC BAA-161 / DSM 6008 / Z-2901), this protein is Uridylate kinase.